We begin with the raw amino-acid sequence, 199 residues long: ParB-like protein Saci_1498 (199 aa).

The protein belongs to the ParB family.

Its function is as follows. Probably part of a 4-gene DNA damage response locus in which the upstream ups system, in combination with this downstream locus, functions in homologous recombination to rescue Sulfolobales from DNA-damaging threats. This protein might function in the DNA transfer machinery. In Sulfolobus acidocaldarius (strain ATCC 33909 / DSM 639 / JCM 8929 / NBRC 15157 / NCIMB 11770), this protein is ParB-like protein Saci_1498.